Consider the following 131-residue polypeptide: Small ribosomal subunit protein uS8 (131 aa).

The protein belongs to the universal ribosomal protein uS8 family. In terms of assembly, part of the 30S ribosomal subunit. Contacts proteins S5 and S12.

In terms of biological role, one of the primary rRNA binding proteins, it binds directly to 16S rRNA central domain where it helps coordinate assembly of the platform of the 30S subunit. The sequence is that of Small ribosomal subunit protein uS8 from Wolbachia pipientis wMel.